A 334-amino-acid polypeptide reads, in one-letter code: Type II methyltransferase M.NlaIII (334 aa).

Belongs to the N(4)/N(6)-methyltransferase family.

It carries out the reaction a 2'-deoxyadenosine in DNA + S-adenosyl-L-methionine = an N(6)-methyl-2'-deoxyadenosine in DNA + S-adenosyl-L-homocysteine + H(+). Its function is as follows. A methylase, recognizes the double-stranded sequence 5'-CATG-3', methylates A-2 on both strands and protects the DNA from cleavage by the NlaIII endonuclease. The chain is Type II methyltransferase M.NlaIII (nlaIIIM) from Neisseria lactamica.